The primary structure comprises 341 residues: Serpentine receptor class beta-3 (341 aa).

Residues 1–23 (MLETNDSVCELAYQLAYHPVYRS) are Extracellular-facing. Asn-5 carries N-linked (GlcNAc...) asparagine glycosylation. Residues 24 to 44 (SQFWSMLVSSLSIPALIYFIT) form a helical membrane-spanning segment. Topologically, residues 45-58 (RKIFFLHFHGNLKC) are cytoplasmic. A helical membrane pass occupies residues 59–79 (LLIVYFICNLLFSMALCFAFF). Topologically, residues 80 to 103 (YQFLIPFFVTSKCQLLINTTLFKW) are extracellular. The N-linked (GlcNAc...) asparagine glycan is linked to Asn-97. Residues 104 to 124 (GQICSFLLLTSSMLLPIGFSI) form a helical membrane-spanning segment. Residues 125 to 141 (ERFVALGNAQKYESSRT) lie on the Cytoplasmic side of the membrane. A helical transmembrane segment spans residues 142-162 (FLGPVIIFIIIAVDFSIIFSV). Residues 163–187 (YKNEPFTEGFYSFILVPSTTASQIN) are Extracellular-facing. A helical membrane pass occupies residues 188-208 (MYFFVLLFVKIFNLLLNCILL). Over 209-237 (RIHKKIRIKYYSLSVRYEMEEILQSSKFT) the chain is Cytoplasmic. Residues 238–258 (FIIRFTHLLFFGFYVVVILFV) form a helical membrane-spanning segment. Residues 259 to 276 (RIMGESFFNGTLNYSVAR) lie on the Extracellular side of the membrane. Residues Asn-267 and Asn-271 are each glycosylated (N-linked (GlcNAc...) asparagine). Residues 277–297 (GVFCTVPTYNLIIVIIGIKSL) form a helical membrane-spanning segment. Over 298–341 (RHLNLQRLNKVQSTVQIKSTGKEGSKNYEDIITNYWDSVSSRTP) the chain is Cytoplasmic.

This sequence belongs to the nematode receptor-like protein srb family. In terms of tissue distribution, expressed throughout the head.

It is found in the cell membrane. The protein localises to the perikaryon. It localises to the cell projection. The protein resides in the dendrite. Its function is as follows. G-protein coupled receptor. The chain is Serpentine receptor class beta-3 from Caenorhabditis elegans.